A 71-amino-acid polypeptide reads, in one-letter code: Beta-defensin 2 (71 aa).

The signal sequence occupies residues 1 to 20; it reads MRTLCSLLLICCLLFSYTTP. 3 disulfides stabilise this stretch: Cys-37/Cys-66, Cys-44/Cys-59, and Cys-49/Cys-67.

This sequence belongs to the beta-defensin family. In terms of tissue distribution, kidney, uterus and to a lesser extent in heart.

The protein resides in the secreted. In terms of biological role, has bactericidal activity. This is Beta-defensin 2 (Defb2) from Mus musculus (Mouse).